The chain runs to 313 residues: Glyoxylate/hydroxypyruvate reductase A (313 aa).

R228 is a catalytic residue. The active-site Proton donor is the H276.

This sequence belongs to the D-isomer specific 2-hydroxyacid dehydrogenase family. GhrA subfamily.

It is found in the cytoplasm. It carries out the reaction glycolate + NADP(+) = glyoxylate + NADPH + H(+). The catalysed reaction is (R)-glycerate + NAD(+) = 3-hydroxypyruvate + NADH + H(+). It catalyses the reaction (R)-glycerate + NADP(+) = 3-hydroxypyruvate + NADPH + H(+). Functionally, catalyzes the NADPH-dependent reduction of glyoxylate and hydroxypyruvate into glycolate and glycerate, respectively. The protein is Glyoxylate/hydroxypyruvate reductase A of Serratia proteamaculans (strain 568).